We begin with the raw amino-acid sequence, 623 residues long: Putative pentatricopeptide repeat-containing protein At3g11460, mitochondrial (623 aa).

The N-terminal 35 residues, Met1–Ser35, are a transit peptide targeting the mitochondrion. PPR repeat units lie at residues Ala17–Pro51, Asp52–Thr86, Glu87–Ser117, Leu120–Val154, Asp155–Ser189, Glu190–Lys220, Gly221–Pro255, Asp256–Pro290, Asn291–Lys321, Ser322–Pro356, Asp357–Glu387, and Gly393–Glu423. Positions Val428–Lys503 are type E motif. The tract at residues Gly504 to Glu535 is type E(+) motif. Residues Leu536 to Trp623 are type DYW motif.

Belongs to the PPR family. PCMP-H subfamily. Interacts with MORF8/RIP1.

Its subcellular location is the mitochondrion. Its function is as follows. Involved in C-to-U editing of mitochondrial RNA. Required specifically for editing the mitochondrial NAD2 transcript. The protein is Putative pentatricopeptide repeat-containing protein At3g11460, mitochondrial (PCMP-H52) of Arabidopsis thaliana (Mouse-ear cress).